The sequence spans 216 residues: Dimethylamine corrinoid protein 2 (216 aa).

A B12-binding N-terminal domain is found at 1–91; it reads MASKEELLQE…EMPAGTETKK (91 aa). In terms of domain architecture, B12-binding spans 92–216; sequence LGVIVNGTVE…AKAKELLLGK (125 aa). His-105 contributes to the methylcob(III)alamin binding site.

Belongs to the methylamine corrinoid protein family.

The protein operates within one-carbon metabolism; methanogenesis from dimethylamine. Functionally, acts as a methyl group carrier between MtbB and MtbA. The polypeptide is Dimethylamine corrinoid protein 2 (mtbC2) (Methanosarcina acetivorans (strain ATCC 35395 / DSM 2834 / JCM 12185 / C2A)).